The primary structure comprises 874 residues: Endothelial PAS domain-containing protein 1 (874 aa).

The interval 1–23 is disordered; the sequence is MTADKEKKRSSSELRKEKSRDAA. The 54-residue stretch at 14-67 folds into the bHLH domain; it reads LRKEKSRDAARCRRSKETEVFYELAHELPLPHSVSSHLDKASIMRLAISFLRTH. Residues 26–53 are DNA-binding; sequence RRSKETEVFYELAHELPLPHSVSSHLDK. Positions 84 to 154 constitute a PAS 1 domain; that stretch reads DQQMDNLYLK…ENLTLKNGSG (71 aa). The segment at 171–192 is required for heterodimer formation with ARNT; sequence RMKCTVTNRGRTVNLKSATWKV. One can recognise a PAS 2 domain in the interval 230-300; that stretch reads QHPSHMDIPL…KSHQNLCTKG (71 aa). In terms of domain architecture, PAC spans 304–347; that stretch reads SGQYRMLAKHGGYVWLETQGTVIYNPRNLQPQCIMCVNYVLSEI. Pro-405 is subject to 4-hydroxyproline. Residues 438-489 form a disordered region; the sequence is WVSGLRSHSAQSESGSLPAFTVPQADTPGNTTPSASSSSSCSTPSSPEDYYS. Over residues 443-452 the composition is skewed to polar residues; it reads RSHSAQSESG. Positions 464-484 are enriched in low complexity; the sequence is TPGNTTPSASSSSSCSTPSSP. Residues 495 to 541 are NTAD; it reads LKIEVIEKLFAMDTEPRDPGSTQTDFSELDLETLAPYIPMDGEDFQL. A 4-hydroxyproline modification is found at Pro-530. The interval 777–803 is disordered; the sequence is LGQPLRHLPPPQPPSTRSSGENAKTGF. A CTAD region spans residues 834–874; that stretch reads SFEPYLLPELTRYDCEVNVPVPGSSTLLQGRDLLRALDQAT. Thr-844 bears the Phosphothreonine mark. Residue Asn-851 is modified to (3S)-3-hydroxyasparagine.

In terms of assembly, interacts with HIF3A isoform 2. Efficient DNA binding requires dimerization with another bHLH protein. Heterodimerizes with ARNT; heterodimer binds to core DNA sequence 5'-TACGTG-3' within the hypoxia response element (HRE) of target gene promoters. Interacts with CREBBP. Interacts with EGLN1. Interacts with VHL. In terms of processing, in normoxia, is probably hydroxylated on Pro-405 and Pro-530 by EGLN1/PHD1, EGLN2/PHD2 and/or EGLN3/PHD3. The hydroxylated prolines promote interaction with VHL, initiating rapid ubiquitination and subsequent proteasomal degradation. Under hypoxia, proline hydroxylation is impaired and ubiquitination is attenuated, resulting in stabilization. Post-translationally, in normoxia, is hydroxylated on Asn-851 by HIF1AN thus probably abrogating interaction with CREBBP and EP300 and preventing transcriptional activation. Phosphorylated on multiple sites in the CTAD. In terms of processing, the iron and 2-oxoglutarate dependent 3-hydroxylation of asparagine is (S) stereospecific within HIF CTAD domains. In terms of tissue distribution, expressed in most tissues, with highest levels in lung, followed by heart, kidney, brain and liver. Predominantly expressed in endothelial cells. Also found in smooth muscle cells of the uterus, neurons, and brown adipose tissue. High expression in embryonic choroid plexus and kidney glomeruli.

It is found in the nucleus. It localises to the nucleus speckle. In terms of biological role, transcription factor involved in the induction of oxygen regulated genes. Heterodimerizes with ARNT; heterodimer binds to core DNA sequence 5'-TACGTG-3' within the hypoxia response element (HRE) of target gene promoters. Regulates the vascular endothelial growth factor (VEGF) expression and seems to be implicated in the development of blood vessels and the tubular system of lung. May also play a role in the formation of the endothelium that gives rise to the blood brain barrier. Potent activator of the Tie-2 tyrosine kinase expression. Activation requires recruitment of transcriptional coactivators such as CREBBP and probably EP300. Interaction with redox regulatory protein APEX seems to activate CTAD. This chain is Endothelial PAS domain-containing protein 1 (Epas1), found in Mus musculus (Mouse).